The sequence spans 288 residues: 4-diphosphocytidyl-2-C-methyl-D-erythritol kinase (288 aa).

Lys8 is an active-site residue. 90–100 (PVGAGLAGGSS) is an ATP binding site. The active site involves Asp132.

The protein belongs to the GHMP kinase family. IspE subfamily.

The catalysed reaction is 4-CDP-2-C-methyl-D-erythritol + ATP = 4-CDP-2-C-methyl-D-erythritol 2-phosphate + ADP + H(+). It participates in isoprenoid biosynthesis; isopentenyl diphosphate biosynthesis via DXP pathway; isopentenyl diphosphate from 1-deoxy-D-xylulose 5-phosphate: step 3/6. In terms of biological role, catalyzes the phosphorylation of the position 2 hydroxy group of 4-diphosphocytidyl-2C-methyl-D-erythritol. The sequence is that of 4-diphosphocytidyl-2-C-methyl-D-erythritol kinase from Chlamydia trachomatis serovar D (strain ATCC VR-885 / DSM 19411 / UW-3/Cx).